Here is a 90-residue protein sequence, read N- to C-terminus: Phosphoribosyl-ATP pyrophosphatase (90 aa).

Belongs to the PRA-PH family.

The protein resides in the cytoplasm. The catalysed reaction is 1-(5-phospho-beta-D-ribosyl)-ATP + H2O = 1-(5-phospho-beta-D-ribosyl)-5'-AMP + diphosphate + H(+). It participates in amino-acid biosynthesis; L-histidine biosynthesis; L-histidine from 5-phospho-alpha-D-ribose 1-diphosphate: step 2/9. This is Phosphoribosyl-ATP pyrophosphatase from Streptomyces griseus subsp. griseus (strain JCM 4626 / CBS 651.72 / NBRC 13350 / KCC S-0626 / ISP 5235).